We begin with the raw amino-acid sequence, 139 residues long: ATP synthase epsilon chain (139 aa).

Belongs to the ATPase epsilon chain family. F-type ATPases have 2 components, CF(1) - the catalytic core - and CF(0) - the membrane proton channel. CF(1) has five subunits: alpha(3), beta(3), gamma(1), delta(1), epsilon(1). CF(0) has three main subunits: a, b and c.

It is found in the cell inner membrane. In terms of biological role, produces ATP from ADP in the presence of a proton gradient across the membrane. This chain is ATP synthase epsilon chain, found in Marinomonas sp. (strain MWYL1).